The chain runs to 393 residues: NAD(P)H-quinone oxidoreductase subunit H, chloroplastic (393 aa).

The protein belongs to the complex I 49 kDa subunit family. NDH is composed of at least 16 different subunits, 5 of which are encoded in the nucleus.

The protein resides in the plastid. It is found in the chloroplast thylakoid membrane. The enzyme catalyses a plastoquinone + NADH + (n+1) H(+)(in) = a plastoquinol + NAD(+) + n H(+)(out). It catalyses the reaction a plastoquinone + NADPH + (n+1) H(+)(in) = a plastoquinol + NADP(+) + n H(+)(out). Its function is as follows. NDH shuttles electrons from NAD(P)H:plastoquinone, via FMN and iron-sulfur (Fe-S) centers, to quinones in the photosynthetic chain and possibly in a chloroplast respiratory chain. The immediate electron acceptor for the enzyme in this species is believed to be plastoquinone. Couples the redox reaction to proton translocation, and thus conserves the redox energy in a proton gradient. This Chlorokybus atmophyticus (Soil alga) protein is NAD(P)H-quinone oxidoreductase subunit H, chloroplastic.